Reading from the N-terminus, the 502-residue chain is Sporulation-specific protein 2 (502 aa).

Residues 1–56 (MPIWKTQTFFTSISVIQIVNKETKVSTKKEKDSMLNQLNTILRFLFLFLQLIKSSA) form the signal peptide. N-linked (GlcNAc...) asparagine glycans are attached at residues N77, N135, N285, N303, N340, N343, and N355. The disordered stretch occupies residues 441–474 (EGNVLGKQETDNDNGKKEKGKNGAKSQGSSKKME). The segment covering 448–461 (QETDNDNGKKEKGK) has biased composition (basic and acidic residues). N475 is lipidated: GPI-anchor amidated asparagine. Positions 476–502 (SAPKNIFIDAFKMSVYAVFTVLFSIIF) are cleaved as a propeptide — removed in mature form.

It belongs to the SPS2 family.

Its subcellular location is the cell membrane. Its function is as follows. Involved in middle stages of meiosis. Redundant with SPS22 for the organization of the beta-glucan layer of the spore wall. The polypeptide is Sporulation-specific protein 2 (SPS2) (Saccharomyces cerevisiae (strain ATCC 204508 / S288c) (Baker's yeast)).